A 40-amino-acid chain; its full sequence is Ferredoxin-2 (40 aa).

A 2Fe-2S ferredoxin-type domain is found at tyrosine 3–arginine 40. Cysteine 39 provides a ligand contact to [2Fe-2S] cluster.

This sequence belongs to the 2Fe2S plant-type ferredoxin family. The cofactor is [2Fe-2S] cluster.

It is found in the plastid. The protein localises to the chloroplast. Functionally, ferredoxins are iron-sulfur proteins that transfer electrons in a wide variety of metabolic reactions. This Pisum sativum (Garden pea) protein is Ferredoxin-2.